Consider the following 337-residue polypeptide: tRNA N6-adenosine threonylcarbamoyltransferase (337 aa).

Fe cation-binding residues include histidine 111 and histidine 115. Residues 134-138, aspartate 167, glycine 180, and asparagine 272 each bind substrate; that span reads LVSGG. A Fe cation-binding site is contributed by aspartate 300.

This sequence belongs to the KAE1 / TsaD family. Requires Fe(2+) as cofactor.

Its subcellular location is the cytoplasm. The catalysed reaction is L-threonylcarbamoyladenylate + adenosine(37) in tRNA = N(6)-L-threonylcarbamoyladenosine(37) in tRNA + AMP + H(+). Required for the formation of a threonylcarbamoyl group on adenosine at position 37 (t(6)A37) in tRNAs that read codons beginning with adenine. Is involved in the transfer of the threonylcarbamoyl moiety of threonylcarbamoyl-AMP (TC-AMP) to the N6 group of A37, together with TsaE and TsaB. TsaD likely plays a direct catalytic role in this reaction. This is tRNA N6-adenosine threonylcarbamoyltransferase from Enterobacter sp. (strain 638).